A 688-amino-acid polypeptide reads, in one-letter code: Elongation factor G (688 aa).

One can recognise a tr-type G domain in the interval lysine 8–valine 282. GTP contacts are provided by residues alanine 17 to threonine 24, aspartate 81 to histidine 85, and asparagine 135 to aspartate 138.

The protein belongs to the TRAFAC class translation factor GTPase superfamily. Classic translation factor GTPase family. EF-G/EF-2 subfamily.

The protein resides in the cytoplasm. In terms of biological role, catalyzes the GTP-dependent ribosomal translocation step during translation elongation. During this step, the ribosome changes from the pre-translocational (PRE) to the post-translocational (POST) state as the newly formed A-site-bound peptidyl-tRNA and P-site-bound deacylated tRNA move to the P and E sites, respectively. Catalyzes the coordinated movement of the two tRNA molecules, the mRNA and conformational changes in the ribosome. The chain is Elongation factor G (fusA) from Mycoplasma genitalium (strain ATCC 33530 / DSM 19775 / NCTC 10195 / G37) (Mycoplasmoides genitalium).